The following is a 729-amino-acid chain: Fatty acid oxidation complex subunit alpha (729 aa).

The tract at residues 1-189 is enoyl-CoA hydratase/isomerase; that stretch reads MLYKGDTLYL…KIGLVDGVVK (189 aa). Asp296 provides a ligand contact to substrate. Residues 311 to 729 are 3-hydroxyacyl-CoA dehydrogenase; sequence ETPKQAAVLG…ARAVGDLKTA (419 aa). Residues Met324, Asp343, 400–402, Lys407, and Ser429 each bind NAD(+); that span reads VVE. The active-site For 3-hydroxyacyl-CoA dehydrogenase activity is the His450. An NAD(+)-binding site is contributed by Asn453. Residues Asn500 and Tyr660 each contribute to the substrate site.

In the N-terminal section; belongs to the enoyl-CoA hydratase/isomerase family. The protein in the C-terminal section; belongs to the 3-hydroxyacyl-CoA dehydrogenase family. As to quaternary structure, heterotetramer of two alpha chains (FadB) and two beta chains (FadA).

It carries out the reaction a (3S)-3-hydroxyacyl-CoA + NAD(+) = a 3-oxoacyl-CoA + NADH + H(+). It catalyses the reaction a (3S)-3-hydroxyacyl-CoA = a (2E)-enoyl-CoA + H2O. The catalysed reaction is a 4-saturated-(3S)-3-hydroxyacyl-CoA = a (3E)-enoyl-CoA + H2O. The enzyme catalyses (3S)-3-hydroxybutanoyl-CoA = (3R)-3-hydroxybutanoyl-CoA. It carries out the reaction a (3Z)-enoyl-CoA = a 4-saturated (2E)-enoyl-CoA. It catalyses the reaction a (3E)-enoyl-CoA = a 4-saturated (2E)-enoyl-CoA. The protein operates within lipid metabolism; fatty acid beta-oxidation. In terms of biological role, involved in the aerobic and anaerobic degradation of long-chain fatty acids via beta-oxidation cycle. Catalyzes the formation of 3-oxoacyl-CoA from enoyl-CoA via L-3-hydroxyacyl-CoA. It can also use D-3-hydroxyacyl-CoA and cis-3-enoyl-CoA as substrate. The polypeptide is Fatty acid oxidation complex subunit alpha (Escherichia fergusonii (strain ATCC 35469 / DSM 13698 / CCUG 18766 / IAM 14443 / JCM 21226 / LMG 7866 / NBRC 102419 / NCTC 12128 / CDC 0568-73)).